Consider the following 211-residue polypeptide: MGGRFIVFEGVEGCGKTSQMQLCAEWLQSLGISVVLTREPGGTELGLDLRRLLLQKAEDKPIAEVTELLLYAADRAQHVAQELKPKLAQGKYILCDRYVDSTIAYQGYGRNLDMNLIHQLNDIATGGLTSDITIWLDVDVEVGLARKRGDNVGLDRIEQETIAFHRRVQQGYADLAASSPKRIIRVDGQLSKETVHKTIQEILSVHLKQWL.

An ATP-binding site is contributed by 10–17; sequence GVEGCGKT.

This sequence belongs to the thymidylate kinase family.

It carries out the reaction dTMP + ATP = dTDP + ADP. In terms of biological role, phosphorylation of dTMP to form dTDP in both de novo and salvage pathways of dTTP synthesis. The protein is Thymidylate kinase of Nostoc sp. (strain PCC 7120 / SAG 25.82 / UTEX 2576).